We begin with the raw amino-acid sequence, 485 residues long: Bifunctional protein GlmU (485 aa).

Residues 1-241 (MSASDFSSAV…ARELAGVNDR (241 aa)) are pyrophosphorylase. Residues 13-16 (LAAG), Lys-27, Gln-84, and 89-90 (GT) each bind UDP-N-acetyl-alpha-D-glucosamine. Asp-114 provides a ligand contact to Mg(2+). UDP-N-acetyl-alpha-D-glucosamine contacts are provided by Gly-151, Glu-166, Asn-181, and Asn-239. Residue Asn-239 participates in Mg(2+) binding. The interval 242 to 262 (VQLAEAGAELNRRTVIAAMRG) is linker. An N-acetyltransferase region spans residues 263–485 (GATIVDPATT…AAQNVHNQEG (223 aa)). The UDP-N-acetyl-alpha-D-glucosamine site is built by Arg-344 and Lys-362. Residue His-374 is the Proton acceptor of the active site. The UDP-N-acetyl-alpha-D-glucosamine site is built by Tyr-377 and Asn-388. Residues Ala-391, 397 to 398 (NY), Ser-416, and Ala-434 each bind acetyl-CoA. Residues 465-485 (RPGTAAAQAAEAAQNVHNQEG) form a disordered region. The segment covering 469 to 478 (AAAQAAEAAQ) has biased composition (low complexity).

This sequence in the N-terminal section; belongs to the N-acetylglucosamine-1-phosphate uridyltransferase family. In the C-terminal section; belongs to the transferase hexapeptide repeat family. In terms of assembly, homotrimer. Mg(2+) is required as a cofactor.

The protein localises to the cytoplasm. It catalyses the reaction alpha-D-glucosamine 1-phosphate + acetyl-CoA = N-acetyl-alpha-D-glucosamine 1-phosphate + CoA + H(+). The catalysed reaction is N-acetyl-alpha-D-glucosamine 1-phosphate + UTP + H(+) = UDP-N-acetyl-alpha-D-glucosamine + diphosphate. It participates in nucleotide-sugar biosynthesis; UDP-N-acetyl-alpha-D-glucosamine biosynthesis; N-acetyl-alpha-D-glucosamine 1-phosphate from alpha-D-glucosamine 6-phosphate (route II): step 2/2. It functions in the pathway nucleotide-sugar biosynthesis; UDP-N-acetyl-alpha-D-glucosamine biosynthesis; UDP-N-acetyl-alpha-D-glucosamine from N-acetyl-alpha-D-glucosamine 1-phosphate: step 1/1. Its pathway is bacterial outer membrane biogenesis; LPS lipid A biosynthesis. In terms of biological role, catalyzes the last two sequential reactions in the de novo biosynthetic pathway for UDP-N-acetylglucosamine (UDP-GlcNAc). The C-terminal domain catalyzes the transfer of acetyl group from acetyl coenzyme A to glucosamine-1-phosphate (GlcN-1-P) to produce N-acetylglucosamine-1-phosphate (GlcNAc-1-P), which is converted into UDP-GlcNAc by the transfer of uridine 5-monophosphate (from uridine 5-triphosphate), a reaction catalyzed by the N-terminal domain. The protein is Bifunctional protein GlmU of Corynebacterium glutamicum (strain ATCC 13032 / DSM 20300 / JCM 1318 / BCRC 11384 / CCUG 27702 / LMG 3730 / NBRC 12168 / NCIMB 10025 / NRRL B-2784 / 534).